The primary structure comprises 896 residues: Translation initiation factor IF-2 (896 aa).

2 stretches are compositionally biased toward basic and acidic residues: residues 94 to 159 and 166 to 219; these read KRDP…KDKV and DMTK…EKNW. The tract at residues 94–307 is disordered; sequence KRDPQEAERL…GSALQQGFQK (214 aa). The span at 256–271 shows a compositional bias: basic residues; sequence GRGRNAKAARPAKKGN. Positions 272–285 are enriched in basic and acidic residues; the sequence is KHAESKADREEARA. The region spanning 395 to 564 is the tr-type G domain; it reads PRAPVVTIMG…LLQAEVLELK (170 aa). A G1 region spans residues 404 to 411; that stretch reads GHVDHGKT. Residue 404–411 participates in GTP binding; the sequence is GHVDHGKT. The tract at residues 429-433 is G2; that stretch reads GITQH. The tract at residues 450–453 is G3; that stretch reads DTPG. Residues 450 to 454 and 504 to 507 contribute to the GTP site; these read DTPGH and NKID. Positions 504-507 are G4; sequence NKID. The segment at 540 to 542 is G5; the sequence is SAK.

It belongs to the TRAFAC class translation factor GTPase superfamily. Classic translation factor GTPase family. IF-2 subfamily.

The protein localises to the cytoplasm. In terms of biological role, one of the essential components for the initiation of protein synthesis. Protects formylmethionyl-tRNA from spontaneous hydrolysis and promotes its binding to the 30S ribosomal subunits. Also involved in the hydrolysis of GTP during the formation of the 70S ribosomal complex. This chain is Translation initiation factor IF-2 (infB), found in Klebsiella oxytoca.